We begin with the raw amino-acid sequence, 47 residues long: Zinc-finger protein TK0143 (47 aa).

The segment at 18-41 (FRCPRCGMVFRSAKAYTRHVNKAH) adopts a C2H2-type zinc-finger fold. Cys20, Cys23, His36, and His41 together coordinate Zn(2+).

Crystallized in association with 70S ribosomes. It depends on Zn(2+) as a cofactor.

The polypeptide is Zinc-finger protein TK0143 (Thermococcus kodakarensis (strain ATCC BAA-918 / JCM 12380 / KOD1) (Pyrococcus kodakaraensis (strain KOD1))).